A 92-amino-acid chain; its full sequence is MKFEAVLRTDLGKGASRRLRNTGYFPAIVYGGEAAPVSISLNHDDVMNQMDKPEFYEAIVLVIDGQEVKVKPQDVQRHAYKPKVEHMDFIRI.

It belongs to the bacterial ribosomal protein bL25 family. As to quaternary structure, part of the 50S ribosomal subunit; part of the 5S rRNA/L5/L18/L25 subcomplex. Contacts the 5S rRNA. Binds to the 5S rRNA independently of L5 and L18.

Functionally, this is one of the proteins that binds to the 5S RNA in the ribosome where it forms part of the central protuberance. This chain is Large ribosomal subunit protein bL25, found in Vibrio cholerae serotype O1 (strain ATCC 39541 / Classical Ogawa 395 / O395).